The sequence spans 93 residues: MALKIRLTKVGSVHQPLYRVVVAEARSRRDGDAVENLGTYTPKSKGSPIKLNMERVDYWLSKGALPTNTMHAMIKKARRSAAAQAEAAPAASA.

Belongs to the bacterial ribosomal protein bS16 family.

The protein is Small ribosomal subunit protein bS16 of Opitutus terrae (strain DSM 11246 / JCM 15787 / PB90-1).